Consider the following 133-residue polypeptide: ATP synthase epsilon chain (133 aa).

The protein belongs to the ATPase epsilon chain family. F-type ATPases have 2 components, CF(1) - the catalytic core - and CF(0) - the membrane proton channel. CF(1) has five subunits: alpha(3), beta(3), gamma(1), delta(1), epsilon(1). CF(0) has three main subunits: a, b and c.

The protein localises to the cell membrane. Produces ATP from ADP in the presence of a proton gradient across the membrane. The chain is ATP synthase epsilon chain from Halalkalibacterium halodurans (strain ATCC BAA-125 / DSM 18197 / FERM 7344 / JCM 9153 / C-125) (Bacillus halodurans).